Consider the following 331-residue polypeptide: Lipoyl synthase (331 aa).

Positions 1 to 33 (MSDALIASSSEAPQSPAEQYDPTRKQKSADKTA) are disordered. Low complexity predominate over residues 7-19 (ASSSEAPQSPAEQ). A compositionally biased stretch (basic and acidic residues) spans 21 to 33 (DPTRKQKSADKTA). [4Fe-4S] cluster-binding residues include cysteine 78, cysteine 83, cysteine 89, cysteine 104, cysteine 108, cysteine 111, and serine 318. The region spanning 89 to 307 (CFGKGTATFM…EEEAYKMGFT (219 aa)) is the Radical SAM core domain.

This sequence belongs to the radical SAM superfamily. Lipoyl synthase family. It depends on [4Fe-4S] cluster as a cofactor.

The protein resides in the cytoplasm. It catalyses the reaction [[Fe-S] cluster scaffold protein carrying a second [4Fe-4S](2+) cluster] + N(6)-octanoyl-L-lysyl-[protein] + 2 oxidized [2Fe-2S]-[ferredoxin] + 2 S-adenosyl-L-methionine + 4 H(+) = [[Fe-S] cluster scaffold protein] + N(6)-[(R)-dihydrolipoyl]-L-lysyl-[protein] + 4 Fe(3+) + 2 hydrogen sulfide + 2 5'-deoxyadenosine + 2 L-methionine + 2 reduced [2Fe-2S]-[ferredoxin]. Its pathway is protein modification; protein lipoylation via endogenous pathway; protein N(6)-(lipoyl)lysine from octanoyl-[acyl-carrier-protein]: step 2/2. Functionally, catalyzes the radical-mediated insertion of two sulfur atoms into the C-6 and C-8 positions of the octanoyl moiety bound to the lipoyl domains of lipoate-dependent enzymes, thereby converting the octanoylated domains into lipoylated derivatives. This chain is Lipoyl synthase, found in Cupriavidus pinatubonensis (strain JMP 134 / LMG 1197) (Cupriavidus necator (strain JMP 134)).